The primary structure comprises 143 residues: Large ribosomal subunit protein uL15 (143 aa).

Positions 1–54 are disordered; the sequence is MELNSIKPADGAKHAARRVGRGIGSGLGKTAGRGHKGQKSRSGGYHKVGFEGGQ. Residues 21–31 show a composition bias toward gly residues; the sequence is RGIGSGLGKTA.

Belongs to the universal ribosomal protein uL15 family. In terms of assembly, part of the 50S ribosomal subunit.

Functionally, binds to the 23S rRNA. The chain is Large ribosomal subunit protein uL15 from Acidovorax ebreus (strain TPSY) (Diaphorobacter sp. (strain TPSY)).